The chain runs to 556 residues: Urocanate hydratase (556 aa).

Residues 52–53, Gln130, 176–178, Glu196, Arg201, 242–243, 263–267, 273–274, and Tyr322 each bind NAD(+); these read GG, GMG, NA, QTSAH, and YL. Residue Cys410 is part of the active site. Gly492 serves as a coordination point for NAD(+).

It belongs to the urocanase family. NAD(+) serves as cofactor.

The protein resides in the cytoplasm. It carries out the reaction 4-imidazolone-5-propanoate = trans-urocanate + H2O. It participates in amino-acid degradation; L-histidine degradation into L-glutamate; N-formimidoyl-L-glutamate from L-histidine: step 2/3. Its function is as follows. Catalyzes the conversion of urocanate to 4-imidazolone-5-propionate. This Shewanella sediminis (strain HAW-EB3) protein is Urocanate hydratase.